We begin with the raw amino-acid sequence, 351 residues long: Chorismate synthase (351 aa).

Positions 39-60 are disordered; that stretch reads EDIQRDLERRRPGKRLTSPRGE. NADP(+) contacts are provided by R48 and R53. FMN contacts are provided by residues 124–126, A276, 291–295, and R317; these read RSS and KPIPS.

The protein belongs to the chorismate synthase family. Homotetramer. FMNH2 serves as cofactor.

The enzyme catalyses 5-O-(1-carboxyvinyl)-3-phosphoshikimate = chorismate + phosphate. It participates in metabolic intermediate biosynthesis; chorismate biosynthesis; chorismate from D-erythrose 4-phosphate and phosphoenolpyruvate: step 7/7. In terms of biological role, catalyzes the anti-1,4-elimination of the C-3 phosphate and the C-6 proR hydrogen from 5-enolpyruvylshikimate-3-phosphate (EPSP) to yield chorismate, which is the branch point compound that serves as the starting substrate for the three terminal pathways of aromatic amino acid biosynthesis. This reaction introduces a second double bond into the aromatic ring system. This is Chorismate synthase from Syntrophobacter fumaroxidans (strain DSM 10017 / MPOB).